Consider the following 403-residue polypeptide: Acetylornithine aminotransferase (403 aa).

Residues 107 to 108 (GA) and Phe-140 contribute to the pyridoxal 5'-phosphate site. Arg-143 is a binding site for N(2)-acetyl-L-ornithine. 225–228 (DEVQ) contacts pyridoxal 5'-phosphate. Lys-254 carries the N6-(pyridoxal phosphate)lysine modification. Ser-282 is a N(2)-acetyl-L-ornithine binding site. Thr-283 serves as a coordination point for pyridoxal 5'-phosphate.

The protein belongs to the class-III pyridoxal-phosphate-dependent aminotransferase family. ArgD subfamily. In terms of assembly, homodimer. Requires pyridoxal 5'-phosphate as cofactor.

The protein localises to the cytoplasm. The enzyme catalyses N(2)-acetyl-L-ornithine + 2-oxoglutarate = N-acetyl-L-glutamate 5-semialdehyde + L-glutamate. Its pathway is amino-acid biosynthesis; L-arginine biosynthesis; N(2)-acetyl-L-ornithine from L-glutamate: step 4/4. The protein is Acetylornithine aminotransferase of Vibrio vulnificus (strain YJ016).